A 509-amino-acid chain; its full sequence is Maturase K (509 aa).

Belongs to the intron maturase 2 family. MatK subfamily.

The protein resides in the plastid. Its subcellular location is the chloroplast. Usually encoded in the trnK tRNA gene intron. Probably assists in splicing its own and other chloroplast group II introns. The sequence is that of Maturase K from Atropa belladonna (Belladonna).